A 130-amino-acid chain; its full sequence is Small ribosomal subunit protein uS9 (130 aa).

This sequence belongs to the universal ribosomal protein uS9 family.

The protein is Small ribosomal subunit protein uS9 of Pseudomonas syringae pv. tomato (strain ATCC BAA-871 / DC3000).